The sequence spans 103 residues: Large ribosomal subunit protein bL21 (103 aa).

The protein belongs to the bacterial ribosomal protein bL21 family. As to quaternary structure, part of the 50S ribosomal subunit. Contacts protein L20.

Its function is as follows. This protein binds to 23S rRNA in the presence of protein L20. In Saccharophagus degradans (strain 2-40 / ATCC 43961 / DSM 17024), this protein is Large ribosomal subunit protein bL21.